Here is a 1039-residue protein sequence, read N- to C-terminus: L-arabinokinase (1039 aa).

The chain crosses the membrane as a helical span at residues 662-678 (AAYVAGTILVLMIELGV). 693-703 (PEGKGVSSSAA) serves as a coordination point for ATP. Aspartate 745 functions as the Proton acceptor in the catalytic mechanism.

The protein belongs to the GHMP kinase family.

Its subcellular location is the membrane. The enzyme catalyses L-arabinose + ATP = beta-L-arabinose 1-phosphate + ADP + H(+). In terms of biological role, arabinose kinase. Involved in the salvage pathway which converts free L-arabinose to UDP-L-arabinose. May play a role in arabinose transport. The chain is L-arabinokinase (ARA1) from Arabidopsis thaliana (Mouse-ear cress).